Here is a 276-residue protein sequence, read N- to C-terminus: NH(3)-dependent NAD(+) synthetase (276 aa).

43-50 (GISGGVDS) provides a ligand contact to ATP. Position 49 (Asp49) interacts with Mg(2+). Deamido-NAD(+) is bound at residue Arg146. Thr166 is a binding site for ATP. Glu171 is a binding site for Mg(2+). Residues Lys179 and Asp186 each contribute to the deamido-NAD(+) site. Positions 195 and 217 each coordinate ATP. 266–267 (HK) provides a ligand contact to deamido-NAD(+).

The protein belongs to the NAD synthetase family. Homodimer.

It catalyses the reaction deamido-NAD(+) + NH4(+) + ATP = AMP + diphosphate + NAD(+) + H(+). It functions in the pathway cofactor biosynthesis; NAD(+) biosynthesis; NAD(+) from deamido-NAD(+) (ammonia route): step 1/1. In terms of biological role, catalyzes the ATP-dependent amidation of deamido-NAD to form NAD. Uses ammonia as a nitrogen source. In Shewanella baltica (strain OS223), this protein is NH(3)-dependent NAD(+) synthetase.